Here is a 262-residue protein sequence, read N- to C-terminus: 4-hydroxy-2-oxovalerate aldolase (262 aa).

The active-site Proton acceptor is the H48. Q149 lines the substrate pocket. Position 151 (E151) interacts with Mg(2+). Residues A176 and D177 each coordinate substrate. D177 contacts Mg(2+).

Belongs to the HpcH/HpaI aldolase family.

The enzyme catalyses (S)-4-hydroxy-2-oxopentanoate = acetaldehyde + pyruvate. The protein operates within xenobiotic degradation; biphenyl degradation. Catalyzes the reversible retro-aldol cleavage of 4-hydroxy-2-oxovalerate to pyruvate and acetaldehyde. In Novosphingobium aromaticivorans (Sphingomonas aromaticivorans), this protein is 4-hydroxy-2-oxovalerate aldolase (bphF).